Consider the following 187-residue polypeptide: UPF0301 protein VF_0434 (187 aa).

Belongs to the UPF0301 (AlgH) family.

The polypeptide is UPF0301 protein VF_0434 (Aliivibrio fischeri (strain ATCC 700601 / ES114) (Vibrio fischeri)).